A 120-amino-acid polypeptide reads, in one-letter code: uncharacterized protein (120 aa).

Residues 8 to 28 form a helical membrane-spanning segment; that stretch reads LIVKWFVGLMLIMMMVAVSLF.

The protein resides in the membrane. This is an uncharacterized protein from Bacillus anthracis.